Here is a 404-residue protein sequence, read N- to C-terminus: Rhomboid-related protein 3 (404 aa).

EF-hand domains lie at 34-69 (APED…HSSK) and 70-105 (LDPH…KRSN). 7 helical membrane passes run 164–184 (WFMI…GVSL), 218–238 (IFMH…LLVG), 250–270 (IGLV…VADM), 274–294 (VVGS…NIVM), 303–325 (FKLL…AVWL), 338–358 (PSFV…VVVL), and 371–391 (WWIF…WNIF). The active-site Nucleophile is serine 278. Histidine 343 is an active-site residue.

Belongs to the peptidase S54 family.

Its subcellular location is the membrane. It catalyses the reaction Cleaves type-1 transmembrane domains using a catalytic dyad composed of serine and histidine that are contributed by different transmembrane domains.. May be involved in regulated intramembrane proteolysis and the subsequent release of functional polypeptides from their membrane anchors. The chain is Rhomboid-related protein 3 (RHBDL3) from Homo sapiens (Human).